Reading from the N-terminus, the 428-residue chain is Histidinol dehydrogenase (428 aa).

NAD(+) is bound by residues Y124, Q186, and N209. Substrate is bound by residues S233, Q255, and H258. Q255 and H258 together coordinate Zn(2+). Active-site proton acceptor residues include E322 and H323. H323, D356, E410, and H415 together coordinate substrate. D356 contributes to the Zn(2+) binding site. H415 contacts Zn(2+).

Belongs to the histidinol dehydrogenase family. The cofactor is Zn(2+).

The catalysed reaction is L-histidinol + 2 NAD(+) + H2O = L-histidine + 2 NADH + 3 H(+). It functions in the pathway amino-acid biosynthesis; L-histidine biosynthesis; L-histidine from 5-phospho-alpha-D-ribose 1-diphosphate: step 9/9. Its function is as follows. Catalyzes the sequential NAD-dependent oxidations of L-histidinol to L-histidinaldehyde and then to L-histidine. The sequence is that of Histidinol dehydrogenase from Bacteroides fragilis (strain YCH46).